Here is a 256-residue protein sequence, read N- to C-terminus: Thiazole synthase (256 aa).

The active-site Schiff-base intermediate with DXP is the Lys-95. 1-deoxy-D-xylulose 5-phosphate contacts are provided by residues Gly-156, 182-183, and 204-205; these read AG and NT.

This sequence belongs to the ThiG family. In terms of assembly, homotetramer. Forms heterodimers with either ThiH or ThiS.

It is found in the cytoplasm. The enzyme catalyses [ThiS sulfur-carrier protein]-C-terminal-Gly-aminoethanethioate + 2-iminoacetate + 1-deoxy-D-xylulose 5-phosphate = [ThiS sulfur-carrier protein]-C-terminal Gly-Gly + 2-[(2R,5Z)-2-carboxy-4-methylthiazol-5(2H)-ylidene]ethyl phosphate + 2 H2O + H(+). It participates in cofactor biosynthesis; thiamine diphosphate biosynthesis. Catalyzes the rearrangement of 1-deoxy-D-xylulose 5-phosphate (DXP) to produce the thiazole phosphate moiety of thiamine. Sulfur is provided by the thiocarboxylate moiety of the carrier protein ThiS. In vitro, sulfur can be provided by H(2)S. The sequence is that of Thiazole synthase from Alteromonas mediterranea (strain DSM 17117 / CIP 110805 / LMG 28347 / Deep ecotype).